A 37-amino-acid polypeptide reads, in one-letter code: Esculentin-2L (37 aa).

An intrachain disulfide couples cysteine 31 to cysteine 37.

Expressed by the skin glands.

The protein resides in the secreted. Functionally, antibacterial activity against Gram-positive bacterium S.aureus and Gram-negative bacterium E.coli. Has activity against C.albicans. The chain is Esculentin-2L from Rana luteiventris (Columbia spotted frog).